Reading from the N-terminus, the 216-residue chain is Alanyl-tRNA editing protein AlaX-M (216 aa).

3 residues coordinate Zn(2+): His99, His103, and Cys182.

Belongs to the class-II aminoacyl-tRNA synthetase family. Editing domain AlaX-M subfamily. As to quaternary structure, monomer. Zn(2+) is required as a cofactor.

Its subcellular location is the cytoplasm. Functionally, functions in trans to edit the amino acid moiety from mischarged charged Gly-tRNA(Ala) and Ser-tRNA(Ala). The polypeptide is Alanyl-tRNA editing protein AlaX-M (alaXM) (Pyrococcus horikoshii (strain ATCC 700860 / DSM 12428 / JCM 9974 / NBRC 100139 / OT-3)).